The sequence spans 180 residues: ATP synthase subunit delta (180 aa).

Belongs to the ATPase delta chain family. F-type ATPases have 2 components, F(1) - the catalytic core - and F(0) - the membrane proton channel. F(1) has five subunits: alpha(3), beta(3), gamma(1), delta(1), epsilon(1). F(0) has three main subunits: a(1), b(2) and c(10-14). The alpha and beta chains form an alternating ring which encloses part of the gamma chain. F(1) is attached to F(0) by a central stalk formed by the gamma and epsilon chains, while a peripheral stalk is formed by the delta and b chains.

The protein resides in the cell inner membrane. F(1)F(0) ATP synthase produces ATP from ADP in the presence of a proton or sodium gradient. F-type ATPases consist of two structural domains, F(1) containing the extramembraneous catalytic core and F(0) containing the membrane proton channel, linked together by a central stalk and a peripheral stalk. During catalysis, ATP synthesis in the catalytic domain of F(1) is coupled via a rotary mechanism of the central stalk subunits to proton translocation. Its function is as follows. This protein is part of the stalk that links CF(0) to CF(1). It either transmits conformational changes from CF(0) to CF(1) or is implicated in proton conduction. The polypeptide is ATP synthase subunit delta (Geobacter metallireducens (strain ATCC 53774 / DSM 7210 / GS-15)).